Reading from the N-terminus, the 146-residue chain is 3-dehydroquinate dehydratase (146 aa).

The active-site Proton acceptor is Tyr-23. Residues Asn-74, His-80, and Asp-87 each contribute to the substrate site. His-100 functions as the Proton donor in the catalytic mechanism. Substrate contacts are provided by residues 101–102 and Arg-111; that span reads IS.

Belongs to the type-II 3-dehydroquinase family. As to quaternary structure, homododecamer.

The catalysed reaction is 3-dehydroquinate = 3-dehydroshikimate + H2O. It participates in metabolic intermediate biosynthesis; chorismate biosynthesis; chorismate from D-erythrose 4-phosphate and phosphoenolpyruvate: step 3/7. Functionally, catalyzes a trans-dehydration via an enolate intermediate. The chain is 3-dehydroquinate dehydratase from Bacillus cereus (strain ATCC 14579 / DSM 31 / CCUG 7414 / JCM 2152 / NBRC 15305 / NCIMB 9373 / NCTC 2599 / NRRL B-3711).